A 263-amino-acid chain; its full sequence is GTP cyclohydrolase 1 type 2 homolog (263 aa).

Histidine 76, histidine 77, aspartate 113, histidine 231, and glutamate 235 together coordinate a divalent metal cation.

This sequence belongs to the GTP cyclohydrolase I type 2/NIF3 family. As to quaternary structure, homohexamer.

The protein is GTP cyclohydrolase 1 type 2 homolog of Deinococcus radiodurans (strain ATCC 13939 / DSM 20539 / JCM 16871 / CCUG 27074 / LMG 4051 / NBRC 15346 / NCIMB 9279 / VKM B-1422 / R1).